Reading from the N-terminus, the 773-residue chain is Transducin-like enhancer protein 4 (773 aa).

Disordered stretches follow at residues 1–22 (MIRDLSKMYPQTRHPAPHQPAQ), 140–162 (HGHGLPVPLTPHPSGLQPPAIPP), and 182–360 (LPIK…ASSL). Positions 1-136 (MIRDLSKMYP…AIIGQQLQAQ (136 aa)) are q domain. The interval 137–204 (HLSHGHGLPV…HQRDRDSIKS (68 aa)) is GP domain. Residues 183-202 (PIKDEKKHHDNDHQRDRDSI) are compositionally biased toward basic and acidic residues. Residues 203 to 212 (KSSSVSPSAS) show a composition bias toward low complexity. Residues 205–274 (SSVSPSASFR…SPRGSPAHSP (70 aa)) form a ccN domain region. Phosphoserine is present on residues serine 208, serine 212, and serine 222. The segment covering 215–252 (GAEKHRNSADYSSESKKQKTEEKEIAARYDSDGEKSDD) has biased composition (basic and acidic residues). Lysine 237 carries the N6-acetyllysine modification. Serine 245, serine 250, serine 269, and serine 273 each carry phosphoserine. The span at 273–289 (SPRENGLDKTRLLKKDA) shows a compositional bias: basic and acidic residues. The SP domain stretch occupies residues 275–452 (RENGLDKTRL…PGGKPAYSFH (178 aa)). The residue at position 281 (lysine 281) is an N6-acetyllysine. Residues 290–305 (PISPASIASSSSTPSS) show a composition bias toward low complexity. At serine 292 the chain carries Phosphoserine. Residues 317–328 (TTPVSKSNTPTP) are compositionally biased toward polar residues. Threonine 318 is modified (phosphothreonine). Phosphoserine is present on residues serine 321 and serine 323. A phosphothreonine mark is found at threonine 325, threonine 327, threonine 334, and threonine 340. Serine 419 is modified (phosphoserine). WD repeat units lie at residues 485-523 (NHGEVVCAVTISNPTRHVYTGGKGCVKVWDISHPGNKSP), 531-570 (NRDNYIRSCRLLPDGRTLIVGGEASTLSIWDLAAPTPRIK), 575-614 (SSAPACYALAISPDSKVCFSCCSDGNIAVWDLHNQTLVRQ), 617-656 (GHTDGASCIDISNDGTKLWTGGLDNTVRSWDLREGRQLQQ), 658-697 (DFTSQIFSLGYCPTGEWLAVGMENSNVEVLHVTKPDKYQL), 699-738 (LHESCVLSLKFAHCGKWFVSTGKDNLLNAWRTPYGASIFQ), and 740-773 (KESSSVLSCDISVDDKYIVTGSGDKKATVYEVIY).

Belongs to the WD repeat Groucho/TLE family. As to quaternary structure, homooligomer and heterooligomer with other family members. Interacts with PAX5. Interacts with LEF1, TCF7, TCF7L1 and TCF7L2. Interacts with ZNF703; TLE4 may mediate ZNF703 transcriptional repression. Interacts with SIX3 and SIX6. Interacts with PAX2. Interacts with TLE1. In terms of processing, phosphorylated. PAX5 binding increases phosphorylation. Ubiquitinated by XIAP/BIRC4. In terms of tissue distribution, in all tissues examined, mostly in brain, and muscle.

The protein localises to the nucleus. Its function is as follows. Transcriptional corepressor that binds to a number of transcription factors. Inhibits the transcriptional activation mediated by PAX5, and by CTNNB1 and TCF family members in Wnt signaling. The effects of full-length TLE family members may be modulated by association with dominant-negative AES. Essential for the transcriptional repressor activity of SIX3 during retina and lens development and for SIX3 transcriptional auto-repression. Involved in transcriptional repression of GNRHR and enhances MSX1-mediated transcriptional repression of CGA/alpha-GSU. The chain is Transducin-like enhancer protein 4 (TLE4) from Homo sapiens (Human).